We begin with the raw amino-acid sequence, 371 residues long: Cytochrome b (371 aa).

A run of 4 helical transmembrane segments spans residues 25–45 (FGSM…FLAV), 69–90 (WMMQ…YIHI), 105–125 (WMSG…GYVL), and 170–190 (FFAL…LHVI). Residues His-75 and His-89 each contribute to the heme b site. His-174 and His-188 together coordinate heme b. His-193 is an a ubiquinone binding site. Helical transmembrane passes span 218–238 (YKDF…VSFF), 280–300 (LGGA…PFTH), 312–332 (LYQL…WAAT), and 339–358 (FITI…ISIP).

The protein belongs to the cytochrome b family. The cytochrome bc1 complex contains 3 respiratory subunits (MT-CYB, CYC1 and UQCRFS1), 2 core proteins (UQCRC1 and UQCRC2) and probably 6 low-molecular weight proteins. Heme b is required as a cofactor.

It is found in the mitochondrion inner membrane. Component of the ubiquinol-cytochrome c reductase complex (complex III or cytochrome b-c1 complex) that is part of the mitochondrial respiratory chain. The b-c1 complex mediates electron transfer from ubiquinol to cytochrome c. Contributes to the generation of a proton gradient across the mitochondrial membrane that is then used for ATP synthesis. The chain is Cytochrome b (MT-CYB) from Malayopython reticulatus (Reticulate python).